Here is a 581-residue protein sequence, read N- to C-terminus: Phosphoglucomutase, cytoplasmic (581 aa).

Positions 1-11 are enriched in basic and acidic residues; sequence MVFSVAKKDTT. The interval 1-20 is disordered; that stretch reads MVFSVAKKDTTPYEGQKPGT. Residues R24 and S123 each contribute to the alpha-D-glucose 1,6-bisphosphate site. Catalysis depends on S123, which acts as the Phosphoserine intermediate. Residues S123, D298, D300, and D302 each contribute to the Mg(2+) site. S123 carries the phosphoserine modification. Alpha-D-glucose 1,6-bisphosphate contacts are provided by D302, R303, T366, E385, S387, and K398.

The protein belongs to the phosphohexose mutase family. As to quaternary structure, monomer. Requires Mg(2+) as cofactor.

It localises to the cytoplasm. It carries out the reaction alpha-D-glucose 1-phosphate = alpha-D-glucose 6-phosphate. The enzyme catalyses O-phospho-L-seryl-[protein] + alpha-D-glucose 1-phosphate = alpha-D-glucose 1,6-bisphosphate + L-seryl-[protein]. The catalysed reaction is alpha-D-glucose 1,6-bisphosphate + L-seryl-[protein] = O-phospho-L-seryl-[protein] + alpha-D-glucose 6-phosphate. In terms of biological role, catalyzes the reversible isomerization of alpha-D-glucose 1-phosphate to alpha-D-glucose 6-phosphate. The mechanism proceeds via the intermediate compound alpha-D-glucose 1,6-bisphosphate. This enzyme participates in both the breakdown and synthesis of glucose. This Bromus inermis (Smooth brome grass) protein is Phosphoglucomutase, cytoplasmic (PGM1).